The primary structure comprises 256 residues: uncharacterized protein (256 aa).

The N-terminal stretch at 1 to 22 (MNNFRQCALCIGTSVLILLVSG) is a signal peptide. A lipid anchor (N-palmitoyl cysteine) is attached at Cys23. Cys23 carries S-diacylglycerol cysteine lipidation.

The protein belongs to the staphylococcal tandem lipoprotein family.

It localises to the cell membrane. This is an uncharacterized protein from Staphylococcus aureus (strain bovine RF122 / ET3-1).